The sequence spans 635 residues: Very-long-chain aldehyde decarbonylase GL1-6 (635 aa).

The next 4 helical transmembrane spans lie at 46–66 (LLNF…QLWI), 100–120 (IILT…AQVA), 127–147 (GMVV…YWLH), and 183–203 (VVYF…GTVS). The 135-residue stretch at 139-273 (VEFLYYWLHR…MPVYDYIYGT (135 aa)) folds into the Fatty acid hydroxylase domain.

This sequence belongs to the sterol desaturase family. Homodimer.

It localises to the endoplasmic reticulum membrane. It carries out the reaction a long-chain fatty aldehyde + 2 NADPH + O2 + H(+) = a long-chain alkane + formate + 2 NADP(+) + H2O. Aldehyde decarbonylase involved in the conversion of aldehydes to alkanes. Core component of a very-long-chain alkane synthesis complex. The sequence is that of Very-long-chain aldehyde decarbonylase GL1-6 from Oryza sativa subsp. indica (Rice).